A 247-amino-acid polypeptide reads, in one-letter code: 2,3-bisphosphoglycerate-dependent phosphoglycerate mutase (247 aa).

Substrate contacts are provided by residues 8-15 (RHGESTWN), 21-22 (TG), Arg-60, 87-90 (ERHY), Lys-98, 114-115 (RR), and 183-184 (GN). Catalysis depends on His-9, which acts as the Tele-phosphohistidine intermediate. Glu-87 serves as the catalytic Proton donor/acceptor.

This sequence belongs to the phosphoglycerate mutase family. BPG-dependent PGAM subfamily. In terms of assembly, homodimer.

It catalyses the reaction (2R)-2-phosphoglycerate = (2R)-3-phosphoglycerate. The protein operates within carbohydrate degradation; glycolysis; pyruvate from D-glyceraldehyde 3-phosphate: step 3/5. In terms of biological role, catalyzes the interconversion of 2-phosphoglycerate and 3-phosphoglycerate. The sequence is that of 2,3-bisphosphoglycerate-dependent phosphoglycerate mutase from Delftia acidovorans (strain DSM 14801 / SPH-1).